The following is a 1508-amino-acid chain: Calponin homology domain-containing protein DDB_G0272472 (1508 aa).

Disordered stretches follow at residues 1–165, 197–290, 309–518, 531–561, 680–706, and 1036–1391; these read MFRN…KNDF, DSEE…NLSP, DFKS…TSIV, AANA…LFND, KEKQ…EKEL, and KIEK…KKSA. Residues 81 to 107 show a composition bias toward low complexity; sequence SSSPSTSTTTTTKSSSTTTTTTTSSSS. Basic and acidic residues predominate over residues 208 to 222; it reads PIKKKQSNDLEKNIF. Composition is skewed to low complexity over residues 234–251, 263–290, and 315–332; these read KQST…QKQP, FGDS…NLSP, and SNNT…KSKP. Basic and acidic residues-rich tracts occupy residues 337-346 and 362-371; these read QKEEIKEVST and VDEKPKERST. Polar residues predominate over residues 380-391; that stretch reads KTVTVKSNNSFE. Positions 395-438 are enriched in low complexity; it reads FGSTTTNDDGGDNDFSFTPATTPSSSSSTKATTTSPSSTTTTKS. Polar residues predominate over residues 439-452; the sequence is NINIGQKSNKSVDQ. Positions 455–498 form a coiled coil; it reads QFLNDIFQQEEQDKKRREEEAKLKQQQKQKEKEQIKDEIDDLFK. A compositionally biased stretch (basic and acidic residues) spans 465–498; that stretch reads EQDKKRREEEAKLKQQQKQKEKEQIKDEIDDLFK. 2 stretches are compositionally biased toward low complexity: residues 500–516 and 531–557; these read SKPT…STTS and AANA…KSTN. Residues 1036 to 1164 show a composition bias toward basic and acidic residues; that stretch reads KIEKEKEERD…DQEEKEKQLK (129 aa). 2 stretches are compositionally biased toward low complexity: residues 1165 to 1181 and 1189 to 1206; these read EQQQ…TTTT and DSDA…SSHS. The span at 1216–1225 shows a compositional bias: basic residues; the sequence is SKAKGRKKPT. The segment covering 1226 to 1235 has biased composition (basic and acidic residues); that stretch reads RRELTKDGNR. Over residues 1333–1355 the composition is skewed to low complexity; it reads PTVTQTTTTTTTPPTTPPSSSVQ. Residues 1362 to 1374 show a composition bias toward polar residues; the sequence is RSFSGSSFMGINS. The 108-residue stretch at 1397–1504 folds into the Calponin-homology (CH) domain; that stretch reads MKALDVLLQW…YLSEFFKVMK (108 aa).

This chain is Calponin homology domain-containing protein DDB_G0272472, found in Dictyostelium discoideum (Social amoeba).